The sequence spans 133 residues: Putative pre-16S rRNA nuclease (133 aa).

Belongs to the YqgF nuclease family.

The protein resides in the cytoplasm. In terms of biological role, could be a nuclease involved in processing of the 5'-end of pre-16S rRNA. The polypeptide is Putative pre-16S rRNA nuclease (Dehalococcoides mccartyi (strain ATCC BAA-2266 / KCTC 15142 / 195) (Dehalococcoides ethenogenes (strain 195))).